The following is a 203-amino-acid chain: Probable proteasome subunit beta type-4 (203 aa).

The protein belongs to the peptidase T1B family. As to quaternary structure, the 26S proteasome consists of a 20S proteasome core and two 19S regulatory subunits. The 20S proteasome core is composed of 28 subunits that are arranged in four stacked rings, resulting in a barrel-shaped structure. The two end rings are each formed by seven alpha subunits, and the two central rings are each formed by seven beta subunits. The catalytic chamber with the active sites is on the inside of the barrel.

The protein resides in the cytoplasm. Its subcellular location is the nucleus. Its function is as follows. Non-catalytic component of the proteasome, a multicatalytic proteinase complex which is characterized by its ability to cleave peptides with Arg, Phe, Tyr, Leu, and Glu adjacent to the leaving group at neutral or slightly basic pH. The proteasome has an ATP-dependent proteolytic activity. This is Probable proteasome subunit beta type-4 (pcb-4) from Neurospora crassa (strain ATCC 24698 / 74-OR23-1A / CBS 708.71 / DSM 1257 / FGSC 987).